Reading from the N-terminus, the 192-residue chain is Crossover junction endodeoxyribonuclease RuvC (192 aa).

Residues aspartate 9, glutamate 70, and aspartate 143 contribute to the active site. Positions 9, 70, and 143 each coordinate Mg(2+). Residues 161 to 192 (GASVATTGPGSSSLTPAQRAWAEAEAKARRAR) are disordered. The span at 163–176 (SVATTGPGSSSLTP) shows a compositional bias: polar residues. Over residues 182-192 (AEAEAKARRAR) the composition is skewed to basic and acidic residues.

Belongs to the RuvC family. As to quaternary structure, homodimer which binds Holliday junction (HJ) DNA. The HJ becomes 2-fold symmetrical on binding to RuvC with unstacked arms; it has a different conformation from HJ DNA in complex with RuvA. In the full resolvosome a probable DNA-RuvA(4)-RuvB(12)-RuvC(2) complex forms which resolves the HJ. The cofactor is Mg(2+).

Its subcellular location is the cytoplasm. It catalyses the reaction Endonucleolytic cleavage at a junction such as a reciprocal single-stranded crossover between two homologous DNA duplexes (Holliday junction).. Its function is as follows. The RuvA-RuvB-RuvC complex processes Holliday junction (HJ) DNA during genetic recombination and DNA repair. Endonuclease that resolves HJ intermediates. Cleaves cruciform DNA by making single-stranded nicks across the HJ at symmetrical positions within the homologous arms, yielding a 5'-phosphate and a 3'-hydroxyl group; requires a central core of homology in the junction. The consensus cleavage sequence is 5'-(A/T)TT(C/G)-3'. Cleavage occurs on the 3'-side of the TT dinucleotide at the point of strand exchange. HJ branch migration catalyzed by RuvA-RuvB allows RuvC to scan DNA until it finds its consensus sequence, where it cleaves and resolves the cruciform DNA. This is Crossover junction endodeoxyribonuclease RuvC from Pseudarthrobacter chlorophenolicus (strain ATCC 700700 / DSM 12829 / CIP 107037 / JCM 12360 / KCTC 9906 / NCIMB 13794 / A6) (Arthrobacter chlorophenolicus).